The sequence spans 203 residues: Galactoside O-acetyltransferase (203 aa).

Asp-17, Ser-71, Asn-85, and Asp-93 together coordinate substrate. Asn-85 lines the acetyl-CoA pocket. Catalysis depends on His-115, which acts as the Proton donor/acceptor. Residues Ser-142, Ala-160, 165 to 166 (TK), Arg-180, and Arg-183 each bind acetyl-CoA.

Belongs to the transferase hexapeptide repeat family. Homotrimer. The N-terminus of this protein is heterogeneous because the initiator methionine is only partially cleaved.

The protein resides in the cytoplasm. The enzyme catalyses a beta-D-galactoside + acetyl-CoA = a 6-acetyl-beta-D-galactoside + CoA. Catalyzes the CoA-dependent transfer of an acetyl group to the 6-O-methyl position of a range of galactosides, glucosides, and lactosides. May assist cellular detoxification by acetylating non-metabolizable pyranosides, thereby preventing their reentry into the cell. The polypeptide is Galactoside O-acetyltransferase (lacA) (Escherichia coli (strain K12)).